The following is a 140-amino-acid chain: Natriuretic peptides A (140 aa).

Residues 1 to 24 form the signal peptide; it reads MDTRGSFSCGFLLLLLIQLQPSRA. A propeptide spanning residues 25–111 is cleaved from the precursor; that stretch reads NPIYNLSPAK…KRLRGVQMPR (87 aa). Residues 55 to 94 form a disordered region; it reads ALESNPDLQEPQTQEEIPPELTDDSDEQKAEPKLASNTPL. Residues 71 to 80 show a composition bias toward acidic residues; it reads IPPELTDDSD. Cys-118 and Cys-134 form a disulfide bridge.

This sequence belongs to the natriuretic peptide family. In terms of processing, cleaved by CORIN upon secretion to produce the functional hormone.

The protein resides in the secreted. In terms of biological role, hormone playing a key role in cardiovascular homeostasis through regulation of natriuresis, diuresis, and vasodilation. Specifically binds and stimulates the cGMP production of the NPR1 receptor. Binds the clearance receptor NPR3. The polypeptide is Natriuretic peptides A (NPPA) (Gallus gallus (Chicken)).